Reading from the N-terminus, the 163-residue chain is Peptidyl-prolyl cis-trans isomerase FKBP15-2 (163 aa).

The first 25 residues, 1-25 (MASKMSLRYSLFLIFFSLISLQGFA), serve as a signal peptide directing secretion. The 89-residue stretch at 52–140 (GDTIKVHYRG…IFDTELIAVN (89 aa)) folds into the PPIase FKBP-type domain. The interval 142–163 (KPAGGEEYGGDEDDEGYGNDEL) is disordered. Positions 149–163 (YGGDEDDEGYGNDEL) are enriched in acidic residues. The Prevents secretion from ER signature appears at 160–163 (NDEL).

Belongs to the FKBP-type PPIase family.

Its subcellular location is the endoplasmic reticulum lumen. It carries out the reaction [protein]-peptidylproline (omega=180) = [protein]-peptidylproline (omega=0). In terms of biological role, PPIases accelerate the folding of proteins. It catalyzes the cis-trans isomerization of proline imidic peptide bonds in oligopeptides. This is Peptidyl-prolyl cis-trans isomerase FKBP15-2 (FKBP15-2) from Arabidopsis thaliana (Mouse-ear cress).